A 458-amino-acid polypeptide reads, in one-letter code: Morphogenetic regulator of filamentous growth protein 1 (458 aa).

The interval 401-458 (KKDSGSEPLHAKRRRNSGISPRTTTLGPNGNSNTSNEELPTSDVNDINKDMTKKKMKF) is disordered. Over residues 417–445 (SGISPRTTTLGPNGNSNTSNEELPTSDVN) the composition is skewed to polar residues. Residues 446–458 (DINKDMTKKKMKF) are compositionally biased toward basic and acidic residues.

This sequence belongs to the MFG1 family. As to quaternary structure, interacts with FLO8 and MSS11, both morphogenetic transcription factors binding directly to the FLO11 promoter.

It localises to the nucleus. Transcriptional regulator with a general role in all morphogenetically distinct forms of filamentous growth, namely haploid invasive growth, biofilm formation, and diploid pseudohyphal growth. May control FLO11 gene expression as part of a promoter-bound complex with FLO8 and MSS1. This Saccharomyces cerevisiae (strain ATCC 204508 / S288c) (Baker's yeast) protein is Morphogenetic regulator of filamentous growth protein 1 (MFG1).